We begin with the raw amino-acid sequence, 429 residues long: Choline kinase A2 (429 aa).

Residues 82–88 (KGGMSNM), Arg-111, 152–158 (EYIPSRP), and Gln-257 contribute to the ATP site. 84–86 (GMS) contacts substrate. Glu-258 serves as a coordination point for Ca(2+). Position 301 (Asp-301) interacts with ATP. Residues Glu-320 and Ile-323 each contribute to the Ca(2+) site.

It belongs to the choline/ethanolamine kinase family. Homodimer. A small proportion exists as higher oligomers. Mg(2+) is required as a cofactor.

It carries out the reaction choline + ATP = phosphocholine + ADP + H(+). The enzyme catalyses ethanolamine + ATP = phosphoethanolamine + ADP + H(+). Its pathway is phospholipid metabolism; phosphatidylcholine biosynthesis; phosphocholine from choline: step 1/1. It participates in phospholipid metabolism; phosphatidylethanolamine biosynthesis; phosphatidylethanolamine from ethanolamine: step 1/3. Its activity is regulated as follows. Inhibited by Ca(2+). Mild inhibition by high levels of Mg(2+)(&gt;10 mM). Its function is as follows. Catalyzes the first step in phosphatidylcholine biosynthesis. May contribute to phosphatidylethanolamine biosynthesis. Phosphorylates choline and ethanolamine but the activity is much higher with choline. The chain is Choline kinase A2 from Caenorhabditis elegans.